A 547-amino-acid polypeptide reads, in one-letter code: Chaperonin GroEL (547 aa).

ATP-binding positions include 30 to 33, Lys-51, 87 to 91, Gly-415, 479 to 481, and Asp-495; these read TLGP, DGTTT, and NAA.

The protein belongs to the chaperonin (HSP60) family. In terms of assembly, forms a cylinder of 14 subunits composed of two heptameric rings stacked back-to-back. Interacts with the co-chaperonin GroES.

It localises to the cytoplasm. It carries out the reaction ATP + H2O + a folded polypeptide = ADP + phosphate + an unfolded polypeptide.. Its function is as follows. Together with its co-chaperonin GroES, plays an essential role in assisting protein folding. The GroEL-GroES system forms a nano-cage that allows encapsulation of the non-native substrate proteins and provides a physical environment optimized to promote and accelerate protein folding. The protein is Chaperonin GroEL of Nitratidesulfovibrio vulgaris (strain ATCC 29579 / DSM 644 / CCUG 34227 / NCIMB 8303 / VKM B-1760 / Hildenborough) (Desulfovibrio vulgaris).